A 553-amino-acid chain; its full sequence is Heterochromatin protein 1-binding protein 3 (553 aa).

N-acetylalanine is present on Ala2. Ser6 carries the phosphoserine modification. The disordered stretch occupies residues 30 to 131 (LGEKADDSTM…SKEKEKKVKK (102 aa)). Thr51 carries the post-translational modification Phosphothreonine. Over residues 60-71 (GEEEKPEPDGSS) the composition is skewed to acidic residues. A Glycyl lysine isopeptide (Lys-Gly) (interchain with G-Cter in SUMO2) cross-link involves residue Lys64. Thr85 carries the post-translational modification Phosphothreonine. Residues 91–127 (REAEQPKGEPESGEKEESKSAEETKKEEKDQSKEKEK) are compositionally biased toward basic and acidic residues. Lys97 participates in a covalent cross-link: Glycyl lysine isopeptide (Lys-Gly) (interchain with G-Cter in SUMO2). Phosphoserine occurs at positions 142, 155, and 156. In terms of domain architecture, H15 1 spans 157 to 232 (PRPKMDAILT…GASGSFVVVQ (76 aa)). Lys190 carries the post-translational modification N6-acetyllysine. Residues 231–251 (VQKSKTPQKSKNRKKGSAVDP) are disordered. A compositionally biased stretch (basic residues) spans 236-246 (TPQKSKNRKKG). Ser247 is subject to Phosphoserine. Positions 253 to 257 (PQVKL) match the PxVxL motif motif. H15 domains lie at 253 to 328 (PQVK…QLKK) and 335 to 411 (LGGS…QLCF). A Glycyl lysine isopeptide (Lys-Gly) (interchain with G-Cter in SUMO2) cross-link involves residue Lys256. The disordered stretch occupies residues 422 to 553 (PKKVSDGSED…MKKKSFKTKK (132 aa)). Positions 428 to 449 (GSEDEDEEEDEEESSEDSEDEE) are enriched in acidic residues. Residues Ser441, Ser442, and Ser445 each carry the phosphoserine modification. Basic residues-rich tracts occupy residues 488–509 (GKVR…RKGR) and 542–553 (SAMKKKSFKTKK).

Interacts (via PxVxL motif) with CBX5.

It is found in the nucleus. It localises to the chromosome. Component of heterochromatin that maintains heterochromatin integrity during G1/S progression and regulates the duration of G1 phase to critically influence cell proliferative capacity. May play a role in hypoxia-induced oncogenesis. The polypeptide is Heterochromatin protein 1-binding protein 3 (Hp1bp3) (Rattus norvegicus (Rat)).